The chain runs to 331 residues: Adenosine deaminase (331 aa).

2 residues coordinate Zn(2+): histidine 12 and histidine 14. The substrate site is built by histidine 14, aspartate 16, and glycine 170. Residue histidine 197 coordinates Zn(2+). Glutamate 200 functions as the Proton donor in the catalytic mechanism. Aspartate 278 is a binding site for Zn(2+). Substrate is bound at residue aspartate 279.

This sequence belongs to the metallo-dependent hydrolases superfamily. Adenosine and AMP deaminases family. Adenosine deaminase subfamily. Requires Zn(2+) as cofactor.

It catalyses the reaction adenosine + H2O + H(+) = inosine + NH4(+). It carries out the reaction 2'-deoxyadenosine + H2O + H(+) = 2'-deoxyinosine + NH4(+). Catalyzes the hydrolytic deamination of adenosine and 2-deoxyadenosine. In Shewanella sp. (strain MR-4), this protein is Adenosine deaminase.